The primary structure comprises 480 residues: Cysteine--tRNA ligase (480 aa).

Cysteine 31 provides a ligand contact to Zn(2+). Residues 33 to 43 carry the 'HIGH' region motif; that stretch reads PTVYDSSHIGH. Zn(2+) is bound by residues cysteine 211, histidine 236, and glutamate 240. A 'KMSKS' region motif is present at residues 269–273; the sequence is KMSKS. Lysine 272 is a binding site for ATP.

The protein belongs to the class-I aminoacyl-tRNA synthetase family. Requires Zn(2+) as cofactor.

It catalyses the reaction tRNA(Cys) + L-cysteine + ATP = L-cysteinyl-tRNA(Cys) + AMP + diphosphate. This Encephalitozoon cuniculi (strain GB-M1) (Microsporidian parasite) protein is Cysteine--tRNA ligase.